The chain runs to 101 residues: ATP synthase subunit c (101 aa).

Helical transmembrane passes span 31–51 (AFAY…GAGQ) and 81–101 (AISE…IFVG).

Belongs to the ATPase C chain family. In terms of assembly, F-type ATPases have 2 components, F(1) - the catalytic core - and F(0) - the membrane proton channel. F(1) has five subunits: alpha(3), beta(3), gamma(1), delta(1), epsilon(1). F(0) has three main subunits: a(1), b(2) and c(10-14). The alpha and beta chains form an alternating ring which encloses part of the gamma chain. F(1) is attached to F(0) by a central stalk formed by the gamma and epsilon chains, while a peripheral stalk is formed by the delta and b chains.

It is found in the cell membrane. Functionally, f(1)F(0) ATP synthase produces ATP from ADP in the presence of a proton or sodium gradient. F-type ATPases consist of two structural domains, F(1) containing the extramembraneous catalytic core and F(0) containing the membrane proton channel, linked together by a central stalk and a peripheral stalk. During catalysis, ATP synthesis in the catalytic domain of F(1) is coupled via a rotary mechanism of the central stalk subunits to proton translocation. Its function is as follows. Key component of the F(0) channel; it plays a direct role in translocation across the membrane. A homomeric c-ring of between 10-14 subunits forms the central stalk rotor element with the F(1) delta and epsilon subunits. The sequence is that of ATP synthase subunit c from Mesomycoplasma hyopneumoniae (strain 7448) (Mycoplasma hyopneumoniae).